Reading from the N-terminus, the 428-residue chain is Gamma-glutamyl phosphate reductase (428 aa).

This sequence belongs to the gamma-glutamyl phosphate reductase family.

The protein localises to the cytoplasm. The enzyme catalyses L-glutamate 5-semialdehyde + phosphate + NADP(+) = L-glutamyl 5-phosphate + NADPH + H(+). The protein operates within amino-acid biosynthesis; L-proline biosynthesis; L-glutamate 5-semialdehyde from L-glutamate: step 2/2. In terms of biological role, catalyzes the NADPH-dependent reduction of L-glutamate 5-phosphate into L-glutamate 5-semialdehyde and phosphate. The product spontaneously undergoes cyclization to form 1-pyrroline-5-carboxylate. The sequence is that of Gamma-glutamyl phosphate reductase from Chromohalobacter salexigens (strain ATCC BAA-138 / DSM 3043 / CIP 106854 / NCIMB 13768 / 1H11).